A 120-amino-acid polypeptide reads, in one-letter code: Myohemerythrin (120 aa).

7 residues coordinate Fe cation: His26, His56, Glu60, His75, His79, His108, and Asp113.

It belongs to the hemerythrin family. Monomer.

The protein localises to the cytoplasm. In terms of biological role, myohemerythrin is an oxygen-binding protein found in the retractor muscles of certain worms. The oxygen-binding site contains two iron atoms. This Theromyzon tessulatum (Duck leech) protein is Myohemerythrin.